A 105-amino-acid polypeptide reads, in one-letter code: Class I hydrophobin 1 (105 aa).

An N-terminal signal peptide occupies residues 1-18 (MAFIKSLLIASVAAVAFA). Disulfide bonds link C42/C83, C50/C76, C51/C62, and C84/C100.

Belongs to the fungal hydrophobin family. Self-assembles to form functional amyloid fibrils called rodlets. Self-assembly into fibrillar rodlets occurs spontaneously at hydrophobic:hydrophilic interfaces and the rodlets further associate laterally to form amphipathic monolayers.

The protein localises to the secreted. It localises to the cell wall. Functionally, aerial growth, conidiation, and dispersal of filamentous fungi in the environment rely upon a capability of their secreting small amphipathic proteins called hydrophobins (HPBs) with low sequence identity. Class I can self-assemble into an outermost layer of rodlet bundles on aerial cell surfaces, conferring cellular hydrophobicity that supports fungal growth, development and dispersal; whereas Class II form highly ordered films at water-air interfaces through intermolecular interactions but contribute nothing to the rodlet structure. The sequence is that of Class I hydrophobin 1 from Davidiella tassiana (Mycosphaerella tassiana).